The primary structure comprises 485 residues: Ulvan lyase (485 aa).

The N-terminal stretch at 1 to 33 (MIRNDTMLKGQFVLKKTQIALSAALMGSVLLTG) is a signal peptide. The N-palmitoyl cysteine moiety is linked to residue cysteine 34. Cysteine 34 carries S-diacylglycerol cysteine lipidation. Positions 64 and 126 each coordinate substrate. Residues 108 to 128 (FKAGTSELGRRDGGKKFDNHG) form a disordered region. Residues 115–128 (LGRRDGGKKFDNHG) are compositionally biased toward basic and acidic residues. The Proton donor role is filled by histidine 127. Substrate-binding residues include lysine 129 and histidine 147. Tyrosine 192 (proton acceptor) is an active-site residue. Substrate is bound by residues arginine 208, histidine 212, and tyrosine 250. Zn(2+) is bound at residue histidine 212. 3 residues coordinate Zn(2+): histidine 268, cysteine 270, and histidine 282. Histidine 282 serves as a coordination point for substrate.

This sequence belongs to the polysaccharide lyase 25 family.

It is found in the cell membrane. Its function is as follows. Ulvan lyase involved in ulvan degradation. Ulvan is the main polysaccharide component of the Ulvales (green seaweed) cell wall. It is composed of disaccharide building blocks comprising 3-sulfated rhamnose (Rha3S) linked to D-glucuronic acid (GlcA), L-iduronic acid (IduA), or D-xylose (Xyl). Ulvan lyase catalyzes the endolytic cleavage of the glycosidic bond between Rha3S and the uronic acids GlcA or IduA, producing oligosaccharides that have unsaturated 4-deoxy-L-threo-hex-4-enopyranosiduronic acid (deltaUA) at the non-reducing end. This results eventually in the degradation of the ulvan polysaccharide into deltaUA-Rha3S disaccharides and deltaUA-Rha3S-Xyl-Rha3S tetrasaccharides. The protein is Ulvan lyase of Alteromonas sp. (strain LOR).